Here is a 219-residue protein sequence, read N- to C-terminus: Ribonuclease HII (219 aa).

The RNase H type-2 domain maps to 10-219 (HLEAGTDEAG…LLPEQTVLDL (210 aa)). D16, E17, and D108 together coordinate a divalent metal cation.

This sequence belongs to the RNase HII family. Requires Mn(2+) as cofactor. It depends on Mg(2+) as a cofactor.

Its subcellular location is the cytoplasm. The enzyme catalyses Endonucleolytic cleavage to 5'-phosphomonoester.. Endonuclease that specifically degrades the RNA of RNA-DNA hybrids. The polypeptide is Ribonuclease HII (Flavobacterium psychrophilum (strain ATCC 49511 / DSM 21280 / CIP 103535 / JIP02/86)).